We begin with the raw amino-acid sequence, 149 residues long: MRCPYCSYEESKVVDSRSAEDYNAIRRRRECLRCSKRYTTYEKVEDIPILVIKKDLSRESFNKEKIISGLIKACQKRPVSRAQIEEIASDIERNISNKMMVEIKSDYIGEMIMERLKDIDEVSYVRFASVYRQFKDINTFMEEIKNLMK.

A zinc finger spans residues 3-34; it reads CPYCSYEESKVVDSRSAEDYNAIRRRRECLRC. Positions 49-139 constitute an ATP-cone domain; it reads ILVIKKDLSR…VYRQFKDINT (91 aa).

It belongs to the NrdR family. The cofactor is Zn(2+).

Negatively regulates transcription of bacterial ribonucleotide reductase nrd genes and operons by binding to NrdR-boxes. The protein is Transcriptional repressor NrdR of Clostridium perfringens (strain SM101 / Type A).